The following is a 449-amino-acid chain: Glutamate--tRNA ligase (449 aa).

The 'HIGH' region signature appears at P10–N20. Positions K214 to R218 match the 'KMSKS' region motif. K217 contacts ATP.

Belongs to the class-I aminoacyl-tRNA synthetase family. Glutamate--tRNA ligase type 1 subfamily. In terms of assembly, monomer.

Its subcellular location is the cytoplasm. The enzyme catalyses tRNA(Glu) + L-glutamate + ATP = L-glutamyl-tRNA(Glu) + AMP + diphosphate. Functionally, catalyzes the attachment of glutamate to tRNA(Glu) in a two-step reaction: glutamate is first activated by ATP to form Glu-AMP and then transferred to the acceptor end of tRNA(Glu). This is Glutamate--tRNA ligase from Onion yellows phytoplasma (strain OY-M).